The chain runs to 309 residues: Carbamate kinase 3 (309 aa).

Belongs to the carbamate kinase family.

The protein localises to the cytoplasm. The catalysed reaction is hydrogencarbonate + NH4(+) + ATP = carbamoyl phosphate + ADP + H2O + H(+). It participates in metabolic intermediate metabolism; carbamoyl phosphate degradation; CO(2) and NH(3) from carbamoyl phosphate: step 1/1. The protein is Carbamate kinase 3 (arcC3) of Staphylococcus aureus (strain USA300).